The primary structure comprises 381 residues: Spindlin interactor and repressor of chromatin-binding protein (381 aa).

K49 is covalently cross-linked (Glycyl lysine isopeptide (Lys-Gly) (interchain with G-Cter in SUMO2)). Residues S122 and S149 each carry the phosphoserine modification. Over residues 148–158 the composition is skewed to polar residues; it reads PSLPSLESGQD. The disordered stretch occupies residues 148 to 170; sequence PSLPSLESGQDGQPDPISNPDPV. Glycyl lysine isopeptide (Lys-Gly) (interchain with G-Cter in SUMO2) cross-links involve residues K190 and K221. Disordered stretches follow at residues 203–270, 285–320, and 335–381; these read PVTP…TDGS, LRTT…LRGT, and AVSL…GSGV. The segment covering 219-229 has biased composition (basic and acidic residues); that stretch reads RWKESPENEPA. A phosphoserine mark is found at S249 and S252. The segment covering 288–299 has biased composition (basic and acidic residues); that stretch reads TDCKDSSKDSRA. Glycyl lysine isopeptide (Lys-Gly) (interchain with G-Cter in SUMO2) cross-links involve residues K291 and K295. The segment covering 304–315 has biased composition (low complexity); it reads PQPQNPSSASPP. 2 positions are modified to phosphoserine: S310 and S313.

As to quaternary structure, interacts with SPIN1, SPIN2A, SPIN2B, SPIN3 and SPIN4. Interacts with TCF7L2 in a SPIN1-dependent manner. Interacts with PARP1; promoting PARP1 ADP-ribosyltransferase activity.

The protein localises to the nucleus. It localises to the chromosome. Chromatin protein that stabilizes SPIN1 and enhances its association with histone H3 trimethylated at both 'Lys-4' and 'Lys-9' (H3K4me3K9me3). Positively regulates poly-ADP-ribosylation in response to DNA damage; acts by facilitating PARP1 ADP-ribosyltransferase activity. This Mus musculus (Mouse) protein is Spindlin interactor and repressor of chromatin-binding protein.